The chain runs to 148 residues: Large ribosomal subunit protein bL9 (148 aa).

It belongs to the bacterial ribosomal protein bL9 family.

In terms of biological role, binds to the 23S rRNA. This chain is Large ribosomal subunit protein bL9, found in Pseudomonas fluorescens (strain Pf0-1).